A 361-amino-acid chain; its full sequence is Phosphoserine aminotransferase (361 aa).

The L-glutamate site is built by Ser9 and Arg42. Pyridoxal 5'-phosphate is bound by residues 76–77 (AR), Trp102, Thr153, Asp173, and Gln196. Lys197 is subject to N6-(pyridoxal phosphate)lysine. 238–239 (NT) is a binding site for pyridoxal 5'-phosphate.

Belongs to the class-V pyridoxal-phosphate-dependent aminotransferase family. SerC subfamily. In terms of assembly, homodimer. It depends on pyridoxal 5'-phosphate as a cofactor.

The protein localises to the cytoplasm. The catalysed reaction is O-phospho-L-serine + 2-oxoglutarate = 3-phosphooxypyruvate + L-glutamate. The enzyme catalyses 4-(phosphooxy)-L-threonine + 2-oxoglutarate = (R)-3-hydroxy-2-oxo-4-phosphooxybutanoate + L-glutamate. Its pathway is amino-acid biosynthesis; L-serine biosynthesis; L-serine from 3-phospho-D-glycerate: step 2/3. It functions in the pathway cofactor biosynthesis; pyridoxine 5'-phosphate biosynthesis; pyridoxine 5'-phosphate from D-erythrose 4-phosphate: step 3/5. Functionally, catalyzes the reversible conversion of 3-phosphohydroxypyruvate to phosphoserine and of 3-hydroxy-2-oxo-4-phosphonooxybutanoate to phosphohydroxythreonine. The polypeptide is Phosphoserine aminotransferase (Erwinia tasmaniensis (strain DSM 17950 / CFBP 7177 / CIP 109463 / NCPPB 4357 / Et1/99)).